A 338-amino-acid chain; its full sequence is Glyceraldehyde-3-phosphate dehydrogenase (338 aa).

NAD(+) contacts are provided by residues 12–13 (RI), aspartate 34, and arginine 79. D-glyceraldehyde 3-phosphate-binding positions include 150–152 (SCT), threonine 181, 210–211 (TG), and arginine 233. Cysteine 151 serves as the catalytic Nucleophile. Position 315 (asparagine 315) interacts with NAD(+).

It belongs to the glyceraldehyde-3-phosphate dehydrogenase family. In terms of assembly, homotetramer.

It is found in the cytoplasm. It catalyses the reaction D-glyceraldehyde 3-phosphate + phosphate + NAD(+) = (2R)-3-phospho-glyceroyl phosphate + NADH + H(+). The protein operates within carbohydrate degradation; glycolysis; pyruvate from D-glyceraldehyde 3-phosphate: step 1/5. The chain is Glyceraldehyde-3-phosphate dehydrogenase (gpd1) from Hypocrea atroviridis (Trichoderma atroviride).